We begin with the raw amino-acid sequence, 367 residues long: Septin-1 (367 aa).

One can recognise a Septin-type G domain in the interval 22–296 (KGFDFTLMVA…EGYRARCLQS (275 aa)). A G1 motif region spans residues 32–39 (GESGLGKS). GTP contacts are provided by residues 32-39 (GESGLGKS), Thr-66, Gly-92, and 171-179 (KADALMPKE). Positions 89 to 92 (DTPG) are G3 motif. Residues 170 to 173 (GKAD) form a G4 motif region. Residue Ser-206 is modified to Phosphoserine. Positions 229 and 245 each coordinate GTP. Ser-248 carries the post-translational modification Phosphoserine; by AURKB. A Phosphothreonine modification is found at Thr-251. Ser-307 and Ser-315 each carry phosphoserine; by AURKB.

Belongs to the TRAFAC class TrmE-Era-EngA-EngB-Septin-like GTPase superfamily. Septin GTPase family. As to quaternary structure, septins polymerize into heterooligomeric protein complexes that form filaments, and can associate with cellular membranes, actin filaments and microtubules. GTPase activity is required for filament formation. Interacts with AURKB.

The protein resides in the cytoplasm. It localises to the cytoskeleton. It is found in the microtubule organizing center. The protein localises to the centrosome. Its subcellular location is the midbody. Functionally, filament-forming cytoskeletal GTPase. May play a role in cytokinesis (Potential). The sequence is that of Septin-1 from Bos taurus (Bovine).